Here is a 263-residue protein sequence, read N- to C-terminus: Acetylglutamate kinase (263 aa).

Residues 48-49 (GG), Arg-70, and Asn-162 contribute to the substrate site.

This sequence belongs to the acetylglutamate kinase family. ArgB subfamily.

Its subcellular location is the cytoplasm. It carries out the reaction N-acetyl-L-glutamate + ATP = N-acetyl-L-glutamyl 5-phosphate + ADP. Its pathway is amino-acid biosynthesis; L-arginine biosynthesis; N(2)-acetyl-L-ornithine from L-glutamate: step 2/4. Catalyzes the ATP-dependent phosphorylation of N-acetyl-L-glutamate. This chain is Acetylglutamate kinase, found in Vibrio vulnificus (strain CMCP6).